Here is a 161-residue protein sequence, read N- to C-terminus: Ribosome maturation factor RimP (161 aa).

It belongs to the RimP family.

It is found in the cytoplasm. Its function is as follows. Required for maturation of 30S ribosomal subunits. The chain is Ribosome maturation factor RimP from Pelobacter propionicus (strain DSM 2379 / NBRC 103807 / OttBd1).